The primary structure comprises 316 residues: TATA-box-binding protein (316 aa).

Disordered regions lie at residues 1–21 and 104–135; these read MDQN…QGAM and LTTA…ASES. 2 stretches are compositionally biased toward low complexity: residues 104 to 115 and 123 to 133; these read LTTAPLPGTTPL and MTPITPATPAS. Repeat copies occupy residues 142-218 and 232-309. Residues asparagine 144, arginine 180, lysine 195, asparagine 234, and arginine 271 each contribute to the DNA site.

This sequence belongs to the TBP family. Binds DNA as monomer. Belongs to the TFIID complex together with the TBP-associated factors (TAFs). Part of a TFIID-containing RNA polymerase II pre-initiation complex that is composed of TBP and at least GTF2A1, GTF2A2, GTF2E1, GTF2E2, GTF2F1, GTF2H2, GTF2H3, GTF2H4, GTF2H5, GTF2B, TCEA1, ERCC2, ERCC3, TAF1, TAF2, TAF3, TAF4, TAF5, TAF6, TAF7, TAF8, TAF9, TAF10, TAF11, TAF12 and TAF13. Component of the transcription factor SL1/TIF-IB complex, composed of TBP and at least TAF1A, TAF1B, TAF1C and TAF1D. Association of TBP to form either TFIID or SL1/TIF-IB appears to be mutually exclusive. Interacts with TAF1A, TAF1B and TAF1C. Interacts with TFIIB, NCOA6, DRAP1, DR1 and ELF3. Interacts with SPIB, SNAPC1, SNAPC2 and SNAPC4. Interacts with UTF1. Interacts with BRF2; this interaction promotes recruitment of BRF2 to TATA box-containing promoters. Interacts with UBTF. Interacts with GPBP1. Interacts with CITED2. Interacts with ATF7IP. Interacts with LLPH. Interacts with HSF1 (via transactivation domain). Interacts with GTF2B (via C-terminus); this interaction with promoter-bound TBP guides RNA polymerase II into the pre-initiation complex (PIC). Interacts with PAX5. Interacts with MSX1; the interaction may inhibit MSX1 autoinactivation. Interacts with MSX3. In terms of tissue distribution, ubiquitously expressed.

Its subcellular location is the nucleus. In terms of biological role, general transcription factor that functions at the core of the DNA-binding multiprotein factor TFIID. Binding of TFIID to the TATA box is the initial transcriptional step of the pre-initiation complex (PIC), playing a role in the activation of eukaryotic genes transcribed by RNA polymerase II. Component of a BRF2-containing transcription factor complex that regulates transcription mediated by RNA polymerase III. Component of the transcription factor SL1/TIF-IB complex, which is involved in the assembly of the PIC (pre-initiation complex) during RNA polymerase I-dependent transcription. The rate of PIC formation probably is primarily dependent on the rate of association of SL1 with the rDNA promoter. SL1 is involved in stabilization of nucleolar transcription factor 1/UBTF on rDNA. This chain is TATA-box-binding protein (Tbp), found in Mus musculus (Mouse).